We begin with the raw amino-acid sequence, 577 residues long: Adenine deaminase (577 aa).

The protein belongs to the metallo-dependent hydrolases superfamily. Adenine deaminase family. The cofactor is Mn(2+).

The enzyme catalyses adenine + H2O + H(+) = hypoxanthine + NH4(+). This is Adenine deaminase (adeC) from Bacillus subtilis (strain 168).